We begin with the raw amino-acid sequence, 340 residues long: Nod factor export ATP-binding protein I (340 aa).

A compositionally biased stretch (basic and acidic residues) spans 1–24 (MLKRKLGPEDLRRLETPAIERESH). The disordered stretch occupies residues 1-34 (MLKRKLGPEDLRRLETPAIERESHGQTSAKSSVP). A compositionally biased stretch (polar residues) spans 25–34 (GQTSAKSSVP). The region spanning 42–272 (VDFAGVTKSY…HIGCQVMEIY (231 aa)) is the ABC transporter domain. 74-81 (GPNGAGKS) is a binding site for ATP.

Belongs to the ABC transporter superfamily. Lipooligosaccharide exporter (TC 3.A.1.102) family. The complex is composed of two ATP-binding proteins (NodI) and two transmembrane proteins (NodJ).

It is found in the cell inner membrane. Part of the ABC transporter complex NodIJ involved in the export of the nodulation factors (Nod factors), the bacterial signal molecules that induce symbiosis and subsequent nodulation induction. Nod factors are LCO (lipo-chitin oligosaccharide), a modified beta-1,4-linked N-acetylglucosamine oligosaccharide. This subunit is responsible for energy coupling to the transport system. The protein is Nod factor export ATP-binding protein I of Mesorhizobium japonicum (strain LMG 29417 / CECT 9101 / MAFF 303099) (Mesorhizobium loti (strain MAFF 303099)).